The sequence spans 258 residues: Imidazole glycerol phosphate synthase subunit HisF (258 aa).

Active-site residues include D11 and D130.

This sequence belongs to the HisA/HisF family. As to quaternary structure, heterodimer of HisH and HisF.

It localises to the cytoplasm. It carries out the reaction 5-[(5-phospho-1-deoxy-D-ribulos-1-ylimino)methylamino]-1-(5-phospho-beta-D-ribosyl)imidazole-4-carboxamide + L-glutamine = D-erythro-1-(imidazol-4-yl)glycerol 3-phosphate + 5-amino-1-(5-phospho-beta-D-ribosyl)imidazole-4-carboxamide + L-glutamate + H(+). It participates in amino-acid biosynthesis; L-histidine biosynthesis; L-histidine from 5-phospho-alpha-D-ribose 1-diphosphate: step 5/9. Functionally, IGPS catalyzes the conversion of PRFAR and glutamine to IGP, AICAR and glutamate. The HisF subunit catalyzes the cyclization activity that produces IGP and AICAR from PRFAR using the ammonia provided by the HisH subunit. This is Imidazole glycerol phosphate synthase subunit HisF from Sodalis glossinidius (strain morsitans).